Consider the following 327-residue polypeptide: MGPETLHIGGRKSKLAVIQSNHVLKLIEEKYPDYDCKVFTLQTLGDQIQFKPLYSFGGKALWTKELEDHLYHDDPSKKLDLIVHSLKDMPTLLPEGFELGGITKRVDPTDCLVMPFYSAYKSLDDLPDGGIVGTSSVRRSAQLKRKYPHLKFESVRGNIQTRLQKLDDPKSPYQCIILASAGLMRMGLENRITQRFHSDTMYHAVGQGALGIEIRKGDTKMMKILDEICDLNATICCLSERALMRTLEGGCSVPIGVESKYNEETKKLLLKAIVVDVEGTEAVEDEIEMLIENVKEDSMACGKILAERMIADGAKKILDEINLDRIK.

Residue Cys-251 is modified to S-(dipyrrolylmethanemethyl)cysteine.

The protein belongs to the HMBS family. Dipyrromethane serves as cofactor.

It catalyses the reaction 4 porphobilinogen + H2O = hydroxymethylbilane + 4 NH4(+). It functions in the pathway porphyrin-containing compound metabolism; protoporphyrin-IX biosynthesis; coproporphyrinogen-III from 5-aminolevulinate: step 2/4. In terms of biological role, catalyzes the tetrapolymerization of the monopyrrole porphobilinogen (PBG) into the hydroxymethylbilane pre-uroporphyrinogen in several discrete steps. This Saccharomyces cerevisiae (strain ATCC 204508 / S288c) (Baker's yeast) protein is Porphobilinogen deaminase (HEM3).